The primary structure comprises 467 residues: Glutamate--tRNA ligase (467 aa).

The short motif at 9–19 is the 'HIGH' region element; it reads PSPTGYLHIGG. The 'KMSKS' region motif lies at 237–241; sequence KLSKR. ATP is bound at residue K240.

This sequence belongs to the class-I aminoacyl-tRNA synthetase family. Glutamate--tRNA ligase type 1 subfamily. In terms of assembly, monomer.

The protein resides in the cytoplasm. The catalysed reaction is tRNA(Glu) + L-glutamate + ATP = L-glutamyl-tRNA(Glu) + AMP + diphosphate. Its function is as follows. Catalyzes the attachment of glutamate to tRNA(Glu) in a two-step reaction: glutamate is first activated by ATP to form Glu-AMP and then transferred to the acceptor end of tRNA(Glu). In Stenotrophomonas maltophilia (strain R551-3), this protein is Glutamate--tRNA ligase.